The sequence spans 237 residues: Ribonuclease PH (237 aa).

Phosphate is bound by residues R86 and 124–126 (GTR).

The protein belongs to the RNase PH family. In terms of assembly, homohexameric ring arranged as a trimer of dimers.

It catalyses the reaction tRNA(n+1) + phosphate = tRNA(n) + a ribonucleoside 5'-diphosphate. Phosphorolytic 3'-5' exoribonuclease that plays an important role in tRNA 3'-end maturation. Removes nucleotide residues following the 3'-CCA terminus of tRNAs; can also add nucleotides to the ends of RNA molecules by using nucleoside diphosphates as substrates, but this may not be physiologically important. Probably plays a role in initiation of 16S rRNA degradation (leading to ribosome degradation) during starvation. This Shewanella pealeana (strain ATCC 700345 / ANG-SQ1) protein is Ribonuclease PH.